We begin with the raw amino-acid sequence, 426 residues long: Eukaryotic translation initiation factor 3 subunit M (426 aa).

The region spanning 179–350 (DDEDSYRYLI…KVFLVHRTTY (172 aa)) is the PCI domain. Over residues 385-401 (DVEGQREREQQELERKL) the composition is skewed to basic and acidic residues. Residues 385–426 (DVEGQREREQQELERKLAGAGMGGGPGGDRRRQQKPRTDEDD) are disordered.

This sequence belongs to the eIF-3 subunit M family. In terms of assembly, component of the eukaryotic translation initiation factor 3 (eIF-3) complex.

It localises to the cytoplasm. Component of the eukaryotic translation initiation factor 3 (eIF-3) complex, which is involved in protein synthesis of a specialized repertoire of mRNAs and, together with other initiation factors, stimulates binding of mRNA and methionyl-tRNAi to the 40S ribosome. The eIF-3 complex specifically targets and initiates translation of a subset of mRNAs involved in cell proliferation. The sequence is that of Eukaryotic translation initiation factor 3 subunit M from Chaetomium globosum (strain ATCC 6205 / CBS 148.51 / DSM 1962 / NBRC 6347 / NRRL 1970) (Soil fungus).